The sequence spans 328 residues: Transcriptional regulator protein Pur-beta-B (328 aa).

3 disordered regions span residues 1 to 35, 100 to 124, and 289 to 328; these read MADG…ELAS, SPEQ…RALK, and QERQ…VDDD. Ala2 carries the post-translational modification N-acetylalanine. A compositionally biased stretch (gly residues) spans 9–18; sequence ERGGSSGGPS. Residues 24-35 show a composition bias toward basic and acidic residues; the sequence is MSREQETQELAS. Residues 27–260 are DNA-binding; it reads EQETQELASK…LRVSEVKPSY (234 aa). Positions 289–303 are enriched in basic and acidic residues; sequence QERQRDKMYDRRGPG. Residues 304 to 317 show a composition bias toward gly residues; sequence ERGGSLGPGAGGGG. A compositionally biased stretch (acidic residues) spans 318-328; sequence DDSETEDVDDD.

The protein belongs to the PUR DNA-binding protein family.

The protein resides in the nucleus. Transcriptional regulator which can act as an activator or a repressor. The chain is Transcriptional regulator protein Pur-beta-B (purb-b) from Xenopus laevis (African clawed frog).